The sequence spans 567 residues: Proline--tRNA ligase (567 aa).

It belongs to the class-II aminoacyl-tRNA synthetase family. ProS type 1 subfamily. In terms of assembly, homodimer.

The protein localises to the cytoplasm. The enzyme catalyses tRNA(Pro) + L-proline + ATP = L-prolyl-tRNA(Pro) + AMP + diphosphate. Its function is as follows. Catalyzes the attachment of proline to tRNA(Pro) in a two-step reaction: proline is first activated by ATP to form Pro-AMP and then transferred to the acceptor end of tRNA(Pro). As ProRS can inadvertently accommodate and process non-cognate amino acids such as alanine and cysteine, to avoid such errors it has two additional distinct editing activities against alanine. One activity is designated as 'pretransfer' editing and involves the tRNA(Pro)-independent hydrolysis of activated Ala-AMP. The other activity is designated 'posttransfer' editing and involves deacylation of mischarged Ala-tRNA(Pro). The misacylated Cys-tRNA(Pro) is not edited by ProRS. In Streptomyces griseus subsp. griseus (strain JCM 4626 / CBS 651.72 / NBRC 13350 / KCC S-0626 / ISP 5235), this protein is Proline--tRNA ligase.